The primary structure comprises 451 residues: tRNA(Ile)-lysidine synthase (451 aa).

21–26 provides a ligand contact to ATP; it reads SGGLDS.

This sequence belongs to the tRNA(Ile)-lysidine synthase family.

Its subcellular location is the cytoplasm. It catalyses the reaction cytidine(34) in tRNA(Ile2) + L-lysine + ATP = lysidine(34) in tRNA(Ile2) + AMP + diphosphate + H(+). Functionally, ligates lysine onto the cytidine present at position 34 of the AUA codon-specific tRNA(Ile) that contains the anticodon CAU, in an ATP-dependent manner. Cytidine is converted to lysidine, thus changing the amino acid specificity of the tRNA from methionine to isoleucine. This chain is tRNA(Ile)-lysidine synthase, found in Yersinia pseudotuberculosis serotype O:1b (strain IP 31758).